A 364-amino-acid polypeptide reads, in one-letter code: Putative [LysW]-aminoadipate semialdehyde/glutamate semialdehyde transaminase (364 aa).

Residues 90–91 (GT) and F117 each bind pyridoxal 5'-phosphate. Position 120 (R120) interacts with substrate. Position 202–205 (202–205 (DEVQ)) interacts with pyridoxal 5'-phosphate. An N6-(pyridoxal phosphate)lysine modification is found at K230. Residue S254 participates in substrate binding. A pyridoxal 5'-phosphate-binding site is contributed by T255.

It belongs to the class-III pyridoxal-phosphate-dependent aminotransferase family. LysJ subfamily. As to quaternary structure, homodimer. Requires pyridoxal 5'-phosphate as cofactor.

The protein localises to the cytoplasm. The enzyme catalyses [amino-group carrier protein]-C-terminal-gamma-(L-lysyl)-L-glutamate + 2-oxoglutarate = [amino-group carrier protein]-C-terminal-N-(1-carboxy-5-oxopentan-1-yl)-L-glutamine + L-glutamate. It catalyses the reaction [amino-group carrier protein]-C-terminal-gamma-(L-ornithyl)-L-glutamate + 2-oxoglutarate = [amino-group carrier protein]-C-terminal-gamma-(L-glutamyl-5-semialdehyde)-L-glutamate + L-glutamate. The protein operates within amino-acid biosynthesis; L-lysine biosynthesis via AAA pathway; L-lysine from L-alpha-aminoadipate (Thermus route): step 4/5. It participates in amino-acid biosynthesis; L-arginine biosynthesis. Functionally, involved in both the arginine and lysine biosynthetic pathways. This Pyrococcus abyssi (strain GE5 / Orsay) protein is Putative [LysW]-aminoadipate semialdehyde/glutamate semialdehyde transaminase.